The sequence spans 166 residues: Transcription elongation factor GreA (166 aa).

This sequence belongs to the GreA/GreB family.

In terms of biological role, necessary for efficient RNA polymerase transcription elongation past template-encoded arresting sites. The arresting sites in DNA have the property of trapping a certain fraction of elongating RNA polymerases that pass through, resulting in locked ternary complexes. Cleavage of the nascent transcript by cleavage factors such as GreA or GreB allows the resumption of elongation from the new 3'terminus. GreA releases sequences of 2 to 3 nucleotides. The sequence is that of Transcription elongation factor GreA from Anaeromyxobacter sp. (strain K).